Here is an 836-residue protein sequence, read N- to C-terminus: Hypoxia-inducible factor 1-alpha (836 aa).

The segment at 1-30 (MEGAGGENEKKKMSSERRKEKSRDAARSRR) is disordered. Positions 1 to 401 (MEGAGGENEK…KEPDALTLLA (401 aa)) are interaction with TSGA10. Basic and acidic residues predominate over residues 7–30 (ENEKKKMSSERRKEKSRDAARSRR). The region spanning 17–70 (RRKEKSRDAARSRRSKESEVFYELAHQLPLPHNVSSHLDKASVMRLTISYLRVR) is the bHLH domain. A DNA-binding region spans residues 21–30 (KSRDAARSRR). One can recognise a PAS 1 domain in the interval 80 to 155 (SEDEMKAQMD…EMLTHRNGPV (76 aa)). Residues 170–191 (RMKCTLTSRGRTMNIKSATWKV) are required for heterodimer formation with ARNT. One can recognise a PAS 2 domain in the interval 228–298 (PHPSNIEIPL…KTHHDMFTKG (71 aa)). Phosphoserine; by CK1 is present on serine 247. The region spanning 302 to 345 (TGQYRMLAKRGGYVWVETQATVIYNTKNSQPQCIVCVNYVVSGI) is the PAC domain. Residues 380 to 417 (SEDTSCLFDKLKKEPDALTLLAPAAGDTIISLDFGSDD) are N-terminal VHL recognition site. Lysine 391 is covalently cross-linked (Glycyl lysine isopeptide (Lys-Gly) (interchain with G-Cter in SUMO)). Positions 401–613 (APAAGDTIIS…PSMSTVTGFQ (213 aa)) are ODD. A 4-hydroxyproline modification is found at proline 402. Residue lysine 476 forms a Glycyl lysine isopeptide (Lys-Gly) (interchain with G-Cter in SUMO) linkage. The segment at 492-511 (QIQDQPASPSDGSTRQSSPE) is disordered. The NTAD stretch occupies residues 544–588 (FKLELVEKLFAEDTEAKNPFSTQDTDLDLEMLAPYIPMDDDFQLR). Lysine 545 carries the N6-acetyllysine; alternate modification. Residues lysine 545, lysine 551, and lysine 560 each participate in a glycyl lysine isopeptide (Lys-Gly) (interchain with G-Cter in ubiquitin) cross-link. A Glycyl lysine isopeptide (Lys-Gly) (interchain with G-Cter in ubiquitin); alternate cross-link involves residue lysine 545. At serine 564 the chain carries Phosphoserine; by GSK3-beta. Threonine 568 carries the phosphothreonine; by GSK3-beta modification. The segment at 569–585 (DLDLEMLAPYIPMDDDF) is C-terminal VHL recognition site. Residue proline 577 is modified to 4-hydroxyproline. At serine 589 the chain carries Phosphoserine; by PLK3. The tract at residues 589–795 (SFDQLSPLES…SDLACRLLGQ (207 aa)) is ID. Disordered regions lie at residues 593–684 (LSPL…DRAG) and 707–734 (QRNT…KMEH). At serine 602 the chain carries Phosphoserine; by GSK3-beta. Residues 608–620 (TVTGFQQTQLQKP) show a composition bias toward polar residues. Low complexity predominate over residues 621-632 (TITATATTTATT). A compositionally biased stretch (basic and acidic residues) spans 633 to 647 (DESKTETKDNKEDIK). Residues 652–678 (SPSSTQVPQETTTAKASAYSGTHSRTA) show a composition bias toward polar residues. Serine 668 carries the phosphoserine; by PLK3 modification. Position 719 is an N6-acetyllysine (lysine 719). Residues 728–731 (RKRK) carry the Nuclear localization signal motif. Residues 796 to 836 (SMDESGLPQLTSYDCEVNAPIQGSRNLLQGEELLRALDQVN) form a CTAD region. Cysteine 810 is subject to S-nitrosocysteine. Asparagine 813 is modified ((3S)-3-hydroxyasparagine).

In terms of assembly, interacts with the ARNT; forms a heterodimer that binds core DNA sequence 5'-TACGTG-3' within the hypoxia response element (HRE) of target gene promoters. Interacts with COPS5; the interaction increases the transcriptional activity of HIF1A through increased stability. Interacts with EP300 (via TAZ-type 1 domains); the interaction is stimulated in response to hypoxia and inhibited by CITED2. Interacts with CREBBP (via TAZ-type 1 domains). Interacts with NCOA1, NCOA2, APEX1 and HSP90. Interacts (hydroxylated within the ODD domain) with VHLL (via beta domain); the interaction, leads to polyubiquitination and subsequent HIF1A proteasomal degradation. During hypoxia, sumoylated HIF1A also binds VHL; the interaction promotes the ubiquitination of HIF1A. Interacts with SENP1; the interaction desumoylates HIF1A resulting in stabilization and activation of transcription. Interacts (via the ODD domain) with NAA10; the interaction appears not to acetylate HIF1A nor have any affect on protein stability, during hypoxia. Interacts with RWDD3; the interaction enhances HIF1A sumoylation. Interacts with TSGA10. Interacts with HIF3A. Interacts with RORA (via the DNA binding domain); the interaction enhances HIF1A transcription under hypoxia through increasing protein stability. Interaction with PSMA7 inhibits the transactivation activity of HIF1A under both normoxic and hypoxia-mimicking conditions. Interacts with USP20. Interacts with RACK1; promotes HIF1A ubiquitination and proteasome-mediated degradation. Interacts (via N-terminus) with USP19. Interacts with SIRT2. Interacts (deacetylated form) with EGLN1. Interacts with CBFA2T3. Interacts with HSP90AA1 and HSP90AB1. Interacts with DCUN1D1; this interaction increases the interaction between VHL and DCUN1D1. Interacts with HIF1AN. Post-translationally, S-nitrosylation of Cys-810 may be responsible for increased recruitment of p300 coactivator necessary for transcriptional activity of HIF-1 complex. Requires phosphorylation for DNA-binding. Phosphorylation at Ser-247 by CSNK1D/CK1 represses kinase activity and impairs ARNT binding. Phosphorylation by GSK3-beta and PLK3 promote degradation by the proteasome. In terms of processing, sumoylated; with SUMO1 under hypoxia. Sumoylation is enhanced through interaction with RWDD3. Both sumoylation and desumoylation seem to be involved in the regulation of its stability during hypoxia. Sumoylation can promote either its stabilization or its VHL-dependent degradation by promoting hydroxyproline-independent HIF1A-VHL complex binding, thus leading to HIF1A ubiquitination and proteasomal degradation. Desumoylation by SENP1 increases its stability amd transcriptional activity. There is a disaccord between various publications on the effect of sumoylation and desumoylation on its stability and transcriptional activity. Post-translationally, acetylation of Lys-545 by ARD1 increases interaction with VHL and stimulates subsequent proteasomal degradation. Deacetylation of Lys-719 by SIRT2 increases its interaction with and hydroxylation by EGLN1 thereby inactivating HIF1A activity by inducing its proteasomal degradation. Ubiquitinated; in normoxia, following hydroxylation and interaction with VHL. Lys-545 appears to be the principal site of ubiquitination. Clioquinol, the Cu/Zn-chelator, inhibits ubiquitination through preventing hydroxylation at Asn-813. Ubiquitinated by E3 ligase VHL. Deubiquitinated by UCHL1. In terms of processing, the iron and 2-oxoglutarate dependent 3-hydroxylation of asparagine is (S) stereospecific within HIF CTAD domains. Post-translationally, in normoxia, is hydroxylated on Pro-402 and Pro-577 in the oxygen-dependent degradation domain (ODD) by EGLN1/PHD2 and EGLN2/PHD1. EGLN3/PHD3 has also been shown to hydroxylate Pro-577. The hydroxylated prolines promote interaction with VHL, initiating rapid ubiquitination and subsequent proteasomal degradation. Deubiquitinated by USP20. Under hypoxia, proline hydroxylation is impaired and ubiquitination is attenuated, resulting in stabilization. In normoxia, is hydroxylated on Asn-813 by HIF1AN, thus abrogating interaction with CREBBP and EP300 and preventing transcriptional activation. Repressed by iron ion, via Fe(2+) prolyl hydroxylase (PHD) enzymes-mediated hydroxylation and subsequent proteasomal degradation. In terms of tissue distribution, ubiquitous.

The protein localises to the cytoplasm. The protein resides in the nucleus. It is found in the nucleus speckle. Induced by reactive oxygen species (ROS). Its function is as follows. Functions as a master transcriptional regulator of the adaptive response to hypoxia. Under hypoxic conditions, activates the transcription of over 40 genes, including erythropoietin, glucose transporters, glycolytic enzymes, vascular endothelial growth factor, HILPDA, and other genes whose protein products increase oxygen delivery or facilitate metabolic adaptation to hypoxia. Plays an essential role in embryonic vascularization, tumor angiogenesis and pathophysiology of ischemic disease. Heterodimerizes with ARNT; heterodimer binds to core DNA sequence 5'-TACGTG-3' within the hypoxia response element (HRE) of target gene promoters. Activation requires recruitment of transcriptional coactivators such as CREBBP and EP300. Activity is enhanced by interaction with NCOA1 and/or NCOA2. Interaction with redox regulatory protein APEX1 seems to activate CTAD and potentiates activation by NCOA1 and CREBBP. Involved in the axonal distribution and transport of mitochondria in neurons during hypoxia. This chain is Hypoxia-inducible factor 1-alpha (Hif1a), found in Mus musculus (Mouse).